The chain runs to 193 residues: Interferon type A3 (193 aa).

The N-terminal stretch at 1 to 31 is a signal peptide; the sequence is MAVPASPQHPRGYGILLLTLLLKALATTASA. 3 cysteine pairs are disulfide-bonded: Cys-32/Cys-129, Cys-61/Cys-155, and Cys-68/Cys-168. N-linked (GlcNAc...) asparagine glycans are attached at residues Asn-65, Asn-71, Asn-108, and Asn-186.

The protein belongs to the alpha/beta interferon family.

Its subcellular location is the secreted. Functionally, has antiviral activities. The polypeptide is Interferon type A3 (IFNA3) (Gallus gallus (Chicken)).